The sequence spans 55 residues: Large ribosomal subunit protein bL33 (55 aa).

Belongs to the bacterial ribosomal protein bL33 family.

The chain is Large ribosomal subunit protein bL33 from Wigglesworthia glossinidia brevipalpis.